A 464-amino-acid polypeptide reads, in one-letter code: Fumarate hydratase class II (464 aa).

Residues 96–98, 127–130, 137–139, and Thr185 each bind substrate; these read SGT, HPND, and SSN. His186 (proton donor/acceptor) is an active-site residue. The active site involves Ser316. Substrate contacts are provided by residues Ser317 and 322–324; that span reads KVN.

This sequence belongs to the class-II fumarase/aspartase family. Fumarase subfamily. In terms of assembly, homotetramer.

It is found in the cytoplasm. It carries out the reaction (S)-malate = fumarate + H2O. The protein operates within carbohydrate metabolism; tricarboxylic acid cycle; (S)-malate from fumarate: step 1/1. Involved in the TCA cycle. Catalyzes the stereospecific interconversion of fumarate to L-malate. This Pseudomonas putida (strain ATCC 47054 / DSM 6125 / CFBP 8728 / NCIMB 11950 / KT2440) protein is Fumarate hydratase class II.